The sequence spans 64 residues: Putative antitoxin AF_1074 (64 aa).

Belongs to the UPF0165 family.

Its function is as follows. Possibly the antitoxin component of a type II toxin-antitoxin (TA) system. The protein is Putative antitoxin AF_1074 of Archaeoglobus fulgidus (strain ATCC 49558 / DSM 4304 / JCM 9628 / NBRC 100126 / VC-16).